The primary structure comprises 303 residues: uncharacterized protein (303 aa).

This is an uncharacterized protein from Haemophilus influenzae (strain ATCC 51907 / DSM 11121 / KW20 / Rd).